Here is a 466-residue protein sequence, read N- to C-terminus: Muscarinic acetylcholine receptor M2 (466 aa).

Topologically, residues 1-25 are extracellular; it reads MNNSTYINSSSENVIALESPYKTIE. Residues asparagine 2, asparagine 3, and asparagine 8 are each glycosylated (N-linked (GlcNAc...) asparagine). Residues 26–48 traverse the membrane as a helical segment; sequence VVFIVLVAGSLSLVTIIGNILVM. The Cytoplasmic portion of the chain corresponds to 49-62; it reads VSIKVNRHLQTVNN. A helical membrane pass occupies residues 63–83; it reads YFLFSLACADLIIGIFSMNLY. Residues 84 to 100 lie on the Extracellular side of the membrane; it reads TLYTVIGYWPLGPVVCD. Residues cysteine 99 and cysteine 179 are joined by a disulfide bond. Residues 101-122 form a helical membrane-spanning segment; sequence LWLALDYVVSNASVMNLLIISF. An Important for signaling motif is present at residues 123 to 125; that stretch reads DRY. The Cytoplasmic portion of the chain corresponds to 123 to 142; the sequence is DRYFCVTKPLTYPVKRTTKM. Residues 143–165 form a helical membrane-spanning segment; the sequence is AGMMIAAAWVLSFILWAPAILFW. Residues 166–187 lie on the Extracellular side of the membrane; it reads QFIVGGRTVPDKDCYIQFFSNP. A helical transmembrane segment spans residues 188–212; that stretch reads AVTFGTAIAAFYLPVIIMTVLYWQI. At 213–387 the chain is on the cytoplasmic side; it reads SRASKSRIKK…PPSREKKVTR (175 aa). Disordered regions lie at residues 223–265 and 279–315; these read GKKE…KVQN and QGEE…SASQ. Composition is skewed to polar residues over residues 228 to 238 and 246 to 256; these read AQNQDPVSPSL and PNNNNIPTSSD. Over residues 287–298 the composition is skewed to low complexity; that stretch reads NDSTSVSVVPSN. The helical transmembrane segment at 388-410 threads the bilayer; it reads TILAILLAFIITWTPYNVMVLIN. Over 411–418 the chain is Extracellular; sequence SFCASCIP. An intrachain disulfide couples cysteine 413 to cysteine 416. A helical transmembrane segment spans residues 419-442; it reads GTVWTIGYWLCYINSTINPACYAL. The Important for signaling motif lies at 436–440; the sequence is NPACY. Topologically, residues 443 to 466 are cytoplasmic; that stretch reads CNATFKKTFKHLLMCHYKNIGATR. Residues threonine 446, threonine 450, and threonine 465 each carry the phosphothreonine modification.

The protein belongs to the G-protein coupled receptor 1 family. Muscarinic acetylcholine receptor subfamily. CHRM2 sub-subfamily.

The protein resides in the cell membrane. The protein localises to the postsynaptic cell membrane. Functionally, the muscarinic acetylcholine receptor mediates various cellular responses, including inhibition of adenylate cyclase, breakdown of phosphoinositides and modulation of potassium channels through the action of G proteins. Primary transducing effect is adenylate cyclase inhibition. Signaling promotes phospholipase C activity, leading to the release of inositol trisphosphate (IP3); this then triggers calcium ion release into the cytosol. The chain is Muscarinic acetylcholine receptor M2 (CHRM2) from Gallus gallus (Chicken).